The sequence spans 381 residues: Pentraxin-related protein PTX3 (381 aa).

Positions Met1–Ala17 are cleaved as a signal peptide. Coiled-coil stretches lie at residues Leu74–Arg101 and Glu143–Gln167. 2 cysteine pairs are disulfide-bonded: Cys179–Cys357 and Cys210–Cys271. In terms of domain architecture, Pentraxin (PTX) spans Cys179–Ser381. An N-linked (GlcNAc...) asparagine glycan is attached at Asn220.

In terms of assembly, homooctamer; disulfide-linked. Binds to C1q. As to quaternary structure, (Microbial infection) Interacts with SARS coronavirus-2/SARS-CoV-2 Nucleoprotein and Spike protein homotrimer. In terms of processing, glycosylated.

It is found in the secreted. Functionally, plays a role in the regulation of innate resistance to pathogens, inflammatory reactions, possibly clearance of self-components and female fertility. The protein is Pentraxin-related protein PTX3 of Homo sapiens (Human).